We begin with the raw amino-acid sequence, 624 residues long: MKQTSLALAITALLSTLPSALVQANEGCAPLTGKESGMDIGRSSTERCLPGANPLQDQQWYLLNSGQDGFSARGGIAGNDLNLWWAHRTGVLGQGVNVAVVDDGLAIAHPDLADNVRPGSKNVVTGSDDPTPTDPDTAHGTSVSGIIAAVDNAIGTKGIAPRAQLQGFNLLDDNSQQLQKDWLYALGDSNASRDNRVFNQSYGMSVVDPRSANSLDQSQLDRLFEQQTLKAQGAAYIKAAGNGFNKIAAGGYVLNRTGNGPKLPFENSNLDPSNSNFWNLVVSALNADGVRSSYSSVGSNIFLSATGGEYGTDTPAMVTTDLPGCDMGYNRTDDPSTNRLHGNSQLDASCDYNGVMNGTSSATPSTSGAMALLMSAYPDLSVRDLRDLLARSATRVDAKHQPVMVSYTSSTGKVRDVKGLEGWERNAAGMWFSPTYGFGLIDVNKALELAANHQPLPPLVQLPWQKINVTGSAAAIADVGNSPTSSTTRIATPLTVEAVQVMVSLDHQRLPDLLIELVSPAGTRSILLSPFNSLVGQSLDQQQLGFVRTKGLRDMRMLSNKFYGESAQGTWRLEVTDVANGTRQVSLLNRETRERTTLTERNNRQPGKLISWSLRVLGHDANRS.

An N-terminal signal peptide occupies residues Met1–Ala24. Cys28 and Cys48 are joined by a disulfide. Asn53 lines the Ca(2+) pocket. Residues Gln59–Glu421 enclose the Peptidase S8 domain. Residue Asp102 is the Charge relay system of the active site. Asp111 serves as a coordination point for Ca(2+). The tract at residues Val116–Gly140 is disordered. His139 (charge relay system) is an active-site residue. Residues Val150, Asn152, Ile154, Thr156, Asp321, Leu322, Gly324, Met327, Asn330, and Cys350 each contribute to the Ca(2+) site. A disulfide bridge connects residues Cys325 and Cys350. Ser360 (charge relay system) is an active-site residue. Residues Leu456 to Asn622 form the P/Homo B domain. Ca(2+)-binding residues include Asp478, Asp512, Asp577, Ala579, Asn602, and Asn603.

It belongs to the peptidase S8 family. Furin subfamily. Forms a complex with the chaperone ORF2 in the periplasm. After translocation of the ASP-ORF2 complex from the periplasm to the extracellular space, the complex is dissociated in a pH-dependent manner. It depends on Ca(2+) as a cofactor.

The protein localises to the periplasm. Its subcellular location is the secreted. It catalyses the reaction Cleavage of -Lys-Lys-|-Xaa and -Lys-Arg-|-Xaa bonds.. Folding, maturation and production of the active form of the protease by the cell requires a protein (ORF2), encoded just downstream of asp, which acts as a chaperone. Formation of a complex with ORF2 in the periplasm also inactivates the protease activity and likely protects ASP from intrinsic proteases. In vitro, protease activity is inhibited by human alpha-2-macroglobulin, suggesting that this inhibitor can impede ASP virulence activities in A.sobria infection sites. However, slow ASP inhibition by alpha-2-macroglobulin in plasma may indicate insufficient ASP control in vivo. Activity is inhibited by serine protease inhibitors such as 4-(2-aminoethyl)-benzenesulfonyl fluoride (AEBSF) and diisopropyl fluorophosphate (DFP). Not inhibited by metallo-protease inhibitors and cysteine protease inhibitors. The treatment with reagents to modify sulfhydryl group do not reduce the activity. Exhibits serine protease activity. Preferentially cleaves the peptide bond following two basic residues, one of which is Lys, but does not recognize the bond following a single basic residue. Probable potent virulence factor that cleaves various host plasma proteins, including prekallikrein, prothrombin and fibrinogen. ASP induces vascular leakage and reduction in blood pressure by activating the host plasma kallikrein/kinin system. It affects the host coagulation system during infection through activation of prothrombin to alpha-thrombin and degradation of fibrinogen, which impairs plasma clottability. It also hydrolyzes the complement component C5, releasing the C5a anaphylatoxin, which causes the formation of pus and edema. In addition, degrades its external chaperone ORF2 after the secretion of the ASP-ORF2 complex. This is Aeromonas extracellular serine protease from Aeromonas sobria.